The chain runs to 599 residues: Adenine deaminase (599 aa).

Residues 1-31 are disordered; it reads MARSNRRGGRGDPEDDPAWAPPGHRCAGERA.

It belongs to the metallo-dependent hydrolases superfamily. Adenine deaminase family. Mn(2+) is required as a cofactor.

The catalysed reaction is adenine + H2O + H(+) = hypoxanthine + NH4(+). This chain is Adenine deaminase, found in Methanopyrus kandleri (strain AV19 / DSM 6324 / JCM 9639 / NBRC 100938).